The chain runs to 312 residues: Protoheme IX farnesyltransferase (312 aa).

The next 8 helical transmembrane spans lie at 31 to 51, 52 to 72, 119 to 139, 152 to 172, 179 to 199, 225 to 245, 247 to 267, and 288 to 308; these read VMSLVVFTALVGLLMAPGSFH, PVLAITAIICIAVGGGAAGAL, ILVNWIAAGLLAFTIFFYVVI, IVIGGAAGALPPVVAWASVTG, ILLFLIIFFWTPPHFWALALF, ILLYTVALVAVAAAPWPLGYF, VIYGVASLALGGWMLVLAVRV, and ILYLFALFAILLVEVVAAAVL.

It belongs to the UbiA prenyltransferase family. Protoheme IX farnesyltransferase subfamily.

It localises to the cell inner membrane. The enzyme catalyses heme b + (2E,6E)-farnesyl diphosphate + H2O = Fe(II)-heme o + diphosphate. It participates in porphyrin-containing compound metabolism; heme O biosynthesis; heme O from protoheme: step 1/1. In terms of biological role, converts heme B (protoheme IX) to heme O by substitution of the vinyl group on carbon 2 of heme B porphyrin ring with a hydroxyethyl farnesyl side group. This is Protoheme IX farnesyltransferase from Rhodopseudomonas palustris (strain ATCC BAA-98 / CGA009).